The chain runs to 114 residues: Superoxide dismutase [Cu-Zn] (114 aa).

Histidine 37, histidine 39, and histidine 54 together coordinate Cu cation. Positions 48 to 76 (CMSSGPHFNPRSKEHGAPTDENRHLGDLG) are disordered. The Zn(2+) site is built by histidine 54, histidine 62, histidine 71, and aspartate 74. Over residues 58–73 (RSKEHGAPTDENRHLG) the composition is skewed to basic and acidic residues. Position 111 (histidine 111) interacts with Cu cation.

The protein belongs to the Cu-Zn superoxide dismutase family. As to quaternary structure, homodimer. Cu cation is required as a cofactor. It depends on Zn(2+) as a cofactor.

The protein resides in the cytoplasm. It catalyses the reaction 2 superoxide + 2 H(+) = H2O2 + O2. In terms of biological role, destroys radicals which are normally produced within the cells and which are toxic to biological systems. This chain is Superoxide dismutase [Cu-Zn], found in Drosophila obscura (Fruit fly).